Consider the following 88-residue polypeptide: Small ribosomal subunit protein bS16 (88 aa).

This sequence belongs to the bacterial ribosomal protein bS16 family.

This is Small ribosomal subunit protein bS16 from Geobacter sp. (strain M21).